The primary structure comprises 626 residues: Methanol dehydrogenase [cytochrome c] subunit 1 (626 aa).

The N-terminal stretch at M1 to A27 is a signal peptide. An intrachain disulfide couples C130 to C131. Residues E204 and N288 each contribute to the Ca(2+) site. The Proton acceptor role is filled by D330. An intrachain disulfide couples C413 to C442.

Belongs to the bacterial PQQ dehydrogenase family. In terms of assembly, heterotetramer composed of 2 alpha and 2 beta subunits. Pyrroloquinoline quinone is required as a cofactor. Requires Ca(2+) as cofactor.

It localises to the cell inner membrane. The enzyme catalyses 2 Fe(III)-[cytochrome cL] + a primary alcohol = 2 Fe(II)-[cytochrome cL] + an aldehyde + 2 H(+). Functionally, catalyzes the oxidation of primary alcohols including methanol. This chain is Methanol dehydrogenase [cytochrome c] subunit 1 (moxF), found in Methylobacterium organophilum.